The chain runs to 396 residues: Phosphoglycerate kinase (396 aa).

Residues 21–23 (DFN), Arg36, 59–62 (HLGK), Arg119, and Arg156 each bind substrate. ATP is bound by residues Lys206, Glu325, and 352–355 (GGDS).

Belongs to the phosphoglycerate kinase family. Monomer.

It localises to the cytoplasm. It catalyses the reaction (2R)-3-phosphoglycerate + ATP = (2R)-3-phospho-glyceroyl phosphate + ADP. It participates in carbohydrate degradation; glycolysis; pyruvate from D-glyceraldehyde 3-phosphate: step 2/5. This is Phosphoglycerate kinase from Staphylococcus haemolyticus (strain JCSC1435).